Here is a 410-residue protein sequence, read N- to C-terminus: Calsequestrin-2 (410 aa).

The first 19 residues, 1–19 (MKRTHLFIAGLYLLASCRA), serve as a signal peptide directing secretion. The tract at residues 221-242 (MDEPIAIPDKPYTEEELVEFVK) is calcium regulated hydrophobic site. Residue tyrosine 282 is modified to Phosphotyrosine. N-linked (GlcNAc...) asparagine glycans are attached at residues asparagine 335 and asparagine 395. The interval 364–410 (DVLSGKINTEDDDNEEGDDGDDDEDDDDDDGNNSDEESNDDSDDDDE) is disordered. Residues 373 to 410 (EDDDNEEGDDGDDDEDDDDDDGNNSDEESNDDSDDDDE) show a composition bias toward acidic residues. Phosphoserine; by CK2 occurs at positions 397, 401, and 405.

This sequence belongs to the calsequestrin family. In terms of assembly, interacts with ASPH. Monomer, homodimer and homooligomer. Mostly monomeric in the absence of calcium. Forms higher oligomers in a calcium-dependent manner. Dimers associate to form tetramers, that then form linear homomer chains. Interacts with TRDN. In terms of processing, phosphorylation in the C-terminus, probably by CK2, moderately increases calcium buffering capacity. N-glycosylated. Detected in heart muscle (at protein level).

It is found in the sarcoplasmic reticulum lumen. Its function is as follows. Calsequestrin is a high-capacity, moderate affinity, calcium-binding protein and thus acts as an internal calcium store in muscle. Calcium ions are bound by clusters of acidic residues at the protein surface, especially at the interface between subunits. Can bind around 60 Ca(2+) ions. Regulates the release of lumenal Ca(2+) via the calcium release channel RYR2; this plays an important role in triggering muscle contraction. Plays a role in excitation-contraction coupling in the heart and in regulating the rate of heart beats. In Canis lupus familiaris (Dog), this protein is Calsequestrin-2 (CASQ2).